Here is a 494-residue protein sequence, read N- to C-terminus: Alanine--glyoxylate aminotransferase 2-like (494 aa).

K291 carries the N6-(pyridoxal phosphate)lysine modification.

It belongs to the class-III pyridoxal-phosphate-dependent aminotransferase family. Requires pyridoxal 5'-phosphate as cofactor.

The polypeptide is Alanine--glyoxylate aminotransferase 2-like (Drosophila melanogaster (Fruit fly)).